Reading from the N-terminus, the 990-residue chain is Putative ariadne-like RING finger protein R811 (990 aa).

The VWFA domain occupies 8–201 (DLAIVVDATG…IITQTTIKLL (194 aa)). The tract at residues 797–990 (EKGLCMICFN…GGAFEYDQDD (194 aa)) is TRIAD supradomain. C801, C804, C827, and C830 together coordinate Zn(2+). The RING-type 1 zinc-finger motif lies at 801–854 (CMICFNEFSKSNLRQICGRKVCQSVACYDCMKSWYGENKVGDLIHVNALTCPFC). The segment at 855 to 903 (KQCPMFNILAAFNRQVCAMVRTNNSFDIDWWYGWCLKCFQPKKVVEKEC) adopts an IBR-type zinc-finger fold. Zn(2+)-binding residues include C930 and C935. Residues 930-961 (CPNSLCKIPIIKDGGCNHMECTACKKHFCWLC) form an RING-type 2; atypical zinc finger. C945 is a catalytic residue. Zn(2+) is bound by residues C950 and C953.

This is Putative ariadne-like RING finger protein R811 from Acanthamoeba polyphaga (Amoeba).